The primary structure comprises 697 residues: Elongation factor G (697 aa).

The tr-type G domain occupies 8–282 (EDYRNIGIMA…AVVDYLPSPL (275 aa)). Residues 17–24 (AHIDAGKT), 81–85 (DTPGH), and 135–138 (NKMD) contribute to the GTP site.

It belongs to the TRAFAC class translation factor GTPase superfamily. Classic translation factor GTPase family. EF-G/EF-2 subfamily.

The protein resides in the cytoplasm. Catalyzes the GTP-dependent ribosomal translocation step during translation elongation. During this step, the ribosome changes from the pre-translocational (PRE) to the post-translocational (POST) state as the newly formed A-site-bound peptidyl-tRNA and P-site-bound deacylated tRNA move to the P and E sites, respectively. Catalyzes the coordinated movement of the two tRNA molecules, the mRNA and conformational changes in the ribosome. This Mycoplasmopsis agalactiae (strain NCTC 10123 / CIP 59.7 / PG2) (Mycoplasma agalactiae) protein is Elongation factor G.